A 585-amino-acid polypeptide reads, in one-letter code: Membrane protein insertase YidC (585 aa).

6 consecutive transmembrane segments (helical) span residues 5–25 (SVTG…FMSP), 338–358 (FGWD…AFTW), 362–382 (FVSN…LVTY), 432–452 (LGGC…FYVF), 482–502 (IPMY…TVFL), and 518–538 (IMLY…PSGL).

This sequence belongs to the OXA1/ALB3/YidC family. Type 1 subfamily. Interacts with the Sec translocase complex via SecD. Specifically interacts with transmembrane segments of nascent integral membrane proteins during membrane integration.

The protein localises to the cell inner membrane. In terms of biological role, required for the insertion and/or proper folding and/or complex formation of integral membrane proteins into the membrane. Involved in integration of membrane proteins that insert both dependently and independently of the Sec translocase complex, as well as at least some lipoproteins. Aids folding of multispanning membrane proteins. The sequence is that of Membrane protein insertase YidC from Chlorobium luteolum (strain DSM 273 / BCRC 81028 / 2530) (Pelodictyon luteolum).